Here is a 228-residue protein sequence, read N- to C-terminus: Uracil-DNA glycosylase (228 aa).

Catalysis depends on Asp-64, which acts as the Proton acceptor.

This sequence belongs to the uracil-DNA glycosylase (UDG) superfamily. UNG family.

It localises to the cytoplasm. It catalyses the reaction Hydrolyzes single-stranded DNA or mismatched double-stranded DNA and polynucleotides, releasing free uracil.. Functionally, excises uracil residues from the DNA which can arise as a result of misincorporation of dUMP residues by DNA polymerase or due to deamination of cytosine. The chain is Uracil-DNA glycosylase from Yersinia enterocolitica serotype O:8 / biotype 1B (strain NCTC 13174 / 8081).